The chain runs to 510 residues: Ninja-family protein mc410 (510 aa).

3 disordered regions span residues 1-179, 323-414, and 481-510; these read MDEN…RQIL, HPSH…PSEF, and RHASVEQTSQEPGTGVSSFPSSNPAASAQS. Basic and acidic residues-rich tracts occupy residues 31–44 and 103–146; these read SKVEEVDRDGKVIN and RPVE…DKTR. The span at 148-160 shows a compositional bias: polar residues; the sequence is SHISITTDEGSTA. 2 stretches are compositionally biased toward basic and acidic residues: residues 363–389 and 397–406; these read RAMEHVKGNGRQHKAEETSNSRGEENV and RAKDPPDQPR. Polar residues predominate over residues 485–496; it reads VEQTSQEPGTGV. Residues 497–510 are compositionally biased toward low complexity; the sequence is SSFPSSNPAASAQS.

Belongs to the Ninja family.

It localises to the nucleus. This chain is Ninja-family protein mc410 (MC410), found in Nicotiana tabacum (Common tobacco).